We begin with the raw amino-acid sequence, 309 residues long: Probable L,D-transpeptidase ErfK/SrfK (309 aa).

Positions 1–21 are cleaved as a signal peptide; the sequence is MRRITPFFPFFVLLVSHFSLA. The L,D-TPase catalytic domain maps to 96-231; sequence EGIVVNVAEM…VPVGTRVQII (136 aa). The Proton donor/acceptor role is filled by histidine 191. Catalysis depends on cysteine 207, which acts as the Nucleophile.

It belongs to the YkuD family.

Its subcellular location is the periplasm. Its pathway is cell wall biogenesis; peptidoglycan biosynthesis. The chain is Probable L,D-transpeptidase ErfK/SrfK (erfK) from Salmonella typhimurium (strain LT2 / SGSC1412 / ATCC 700720).